Consider the following 61-residue polypeptide: Protein translocase subunit SecE (61 aa).

A helical transmembrane segment spans residues 39–59 (LGIILIGLIGMLIRIMGILVL).

The protein belongs to the SecE/SEC61-gamma family. Component of the Sec protein translocase complex. Heterotrimer consisting of SecY (alpha), SecG (beta) and SecE (gamma) subunits. The heterotrimers can form oligomers, although 1 heterotrimer is thought to be able to translocate proteins. Interacts with the ribosome. May interact with SecDF, and other proteins may be involved.

It is found in the cell membrane. Its function is as follows. Essential subunit of the Sec protein translocation channel SecYEG. Clamps together the 2 halves of SecY. May contact the channel plug during translocation. The polypeptide is Protein translocase subunit SecE (Pyrococcus abyssi (strain GE5 / Orsay)).